We begin with the raw amino-acid sequence, 364 residues long: UDP-arabinopyranose mutase 1 (364 aa).

The DXD motif signature appears at 110-112; the sequence is DDD. The N-linked (Glc...) arginine glycan is linked to arginine 158.

It belongs to the RGP family. Heteromers with UAM2 and UAM3. The cofactor is Mn(2+). Requires Mg(2+) as cofactor. In terms of processing, reversibly glycosylated in vitro at Arg-158 by UDP-glucose. Reversibly glycosylated by UDP-xylose and UDP-galactose.

Its subcellular location is the golgi apparatus. It catalyses the reaction UDP-beta-L-arabinofuranose = UDP-beta-L-arabinopyranose. UDP-L-arabinose mutase involved in the biosynthesis of cell wall non-cellulosic polysaccharides. Catalyzes the interconvertion of UDP-L-arabinopyranose (UDP-Arap) and UDP-L-arabinofuranose (UDP-Araf). Preferentially catalyzes the formation of UDP-Arap from UDP-Araf. At thermodynamic equilibrium in vitro the ratio of the pyranose form over the furanose form is 90:10. Is probably active as heteromer in vivo. The sequence is that of UDP-arabinopyranose mutase 1 from Oryza sativa subsp. japonica (Rice).